The following is a 787-amino-acid chain: Integrin beta-6 (787 aa).

An N-terminal signal peptide occupies residues 1-21 (MGIELVCLFLLLLGRNDHVQG). The 50-residue stretch at 22–71 (GCAWGGAESCSDCLLTGPHCAWCSQENFTHLSGAGERCDTPANLLAKGCQ) folds into the PSI domain. At 22 to 708 (GCAWGGAESC…KDCPKPPNIP (687 aa)) the chain is on the extracellular side. 19 cysteine pairs are disulfide-bonded: C23–C41, C31–C454, C34–C59, C44–C70, C197–C204, C252–C293, C394–C406, C426–C452, C456–C476, C467–C479, C481–C490, C492–C519, C502–C517, C511–C522, C524–C537, C539–C560, C544–C558, C552–C563, and C565–C574. 2 N-linked (GlcNAc...) asparagine glycosylation sites follow: N48 and N97. Residues 131–371 (YPVDLYYLMD…QLIISAYEEL (241 aa)) form the VWFA domain. D140, S142, and S144 together coordinate Mg(2+). 4 residues coordinate Ca(2+): S144, D147, D148, and E179. Positions 235, 237, 239, and 240 each coordinate Ca(2+). E240 contributes to the Mg(2+) binding site. N-linked (GlcNAc...) asparagine glycosylation occurs at N260. Ca(2+) contacts are provided by D271 and K355. The N-linked (GlcNAc...) asparagine glycan is linked to N387. N418 carries an N-linked (GlcNAc...) asparagine glycan. 4 consecutive I-EGF domains span residues 456–491 (CQRE…PHCE), 492–538 (CGED…PYCQ), 539–575 (CDNF…EYCN), and 576–615 (CTTN…PTCE). N-linked (GlcNAc...) asparagine glycans are attached at residues N463 and N471. N-linked (GlcNAc...) asparagine glycosylation occurs at N541. A glycan (N-linked (GlcNAc...) asparagine) is linked at N575. Cystine bridges form between C576-C599, C583-C597, C591-C602, C604-C614, C617-C620, C624-C669, C630-C649, C633-C645, and C677-C701. Residues 709 to 729 (MIMLGVSLAILLIGVVLLCIW) traverse the membrane as a helical segment. Positions 730–757 (KLLVSFHDRKEVAKFEAERSKAKWQTGT) are interaction with HAX1. Residues 730-787 (KLLVSFHDRKEVAKFEAERSKAKWQTGTNPLYRGSTSTFKNVTYKHREKHKAGLSSDG) lie on the Cytoplasmic side of the membrane.

Belongs to the integrin beta chain family. Heterodimer of an alpha and a beta subunit. Interacts with FLNB. Interacts with HAX1. ITGAV:ITGB6 interacts with FBN1. ITGAV:ITGB6 interacts with TGFB1.

The protein resides in the cell membrane. It is found in the cell junction. It localises to the focal adhesion. Integrin alpha-V:beta-6 (ITGAV:ITGB6) is a receptor for fibronectin and cytotactin. It recognizes the sequence R-G-D in its ligands. ITGAV:ITGB6 acts as a receptor for fibrillin-1 (FBN1) and mediates R-G-D-dependent cell adhesion to FBN1. Integrin alpha-V:beta-6 (ITGAV:ITGB6) mediates R-G-D-dependent release of transforming growth factor beta-1 (TGF-beta-1) from regulatory Latency-associated peptide (LAP), thereby playing a key role in TGF-beta-1 activation. This is Integrin beta-6 (Itgb6) from Mus musculus (Mouse).